A 378-amino-acid polypeptide reads, in one-letter code: Chaperone protein DnaJ (378 aa).

The region spanning 5–69 (EYYDRLGVSK…QKRAAYDQYG (65 aa)) is the J domain. A CR-type zinc finger spans residues 134 to 216 (GVEKEVSYNR…CHGTGHEKQA (83 aa)). Zn(2+) contacts are provided by Cys-147, Cys-150, Cys-164, Cys-167, Cys-190, Cys-193, Cys-204, and Cys-207. 4 CXXCXGXG motif repeats span residues 147–154 (CGTCLGSG), 164–171 (CRKCHGSG), 190–197 (CDICHGSG), and 204–211 (CQTCHGTG).

It belongs to the DnaJ family. In terms of assembly, homodimer. Requires Zn(2+) as cofactor.

The protein resides in the cytoplasm. Functionally, participates actively in the response to hyperosmotic and heat shock by preventing the aggregation of stress-denatured proteins and by disaggregating proteins, also in an autonomous, DnaK-independent fashion. Unfolded proteins bind initially to DnaJ; upon interaction with the DnaJ-bound protein, DnaK hydrolyzes its bound ATP, resulting in the formation of a stable complex. GrpE releases ADP from DnaK; ATP binding to DnaK triggers the release of the substrate protein, thus completing the reaction cycle. Several rounds of ATP-dependent interactions between DnaJ, DnaK and GrpE are required for fully efficient folding. Also involved, together with DnaK and GrpE, in the DNA replication of plasmids through activation of initiation proteins. This is Chaperone protein DnaJ from Streptococcus pyogenes.